The primary structure comprises 515 residues: 1-pyrroline-5-carboxylate dehydrogenase (515 aa).

Active-site residues include E286 and C320.

It belongs to the aldehyde dehydrogenase family. RocA subfamily.

It catalyses the reaction L-glutamate 5-semialdehyde + NAD(+) + H2O = L-glutamate + NADH + 2 H(+). Its pathway is amino-acid degradation; L-proline degradation into L-glutamate; L-glutamate from L-proline: step 2/2. The chain is 1-pyrroline-5-carboxylate dehydrogenase from Geobacillus sp. (strain WCH70).